The primary structure comprises 871 residues: uncharacterized protein (871 aa).

The next 11 helical transmembrane spans lie at 11 to 31, 92 to 112, 139 to 159, 380 to 400, 422 to 442, 475 to 495, 520 to 540, 562 to 582, 586 to 606, 629 to 649, and 653 to 673; these read AFVS…GLFL, YLFT…PILL, FYAH…IIYR, TILT…GCIS, LLGI…MSLV, VQVF…VQVI, FLLQ…TLLL, LSAP…TIMI, IIAP…YFAY, LFQV…LFVL, and WGAT…HLYF. 6 positions are modified to phosphoserine: Ser-725, Ser-726, Ser-727, Ser-729, Ser-737, and Ser-761. Residues 727 to 740 are compositionally biased toward polar residues; sequence SGSDEFLETSSRTS. The segment at 727–746 is disordered; that stretch reads SGSDEFLETSSRTSENTKEK.

The protein belongs to the CSC1 (TC 1.A.17) family.

The protein resides in the golgi apparatus membrane. Functionally, acts as an osmosensitive calcium-permeable cation channel. This is an uncharacterized protein from Schizosaccharomyces pombe (strain 972 / ATCC 24843) (Fission yeast).